The primary structure comprises 238 residues: Synapse differentiation-inducing gene protein 1-like (238 aa).

3 disordered regions span residues 1–24 (MESL…GPYP), 78–111 (KVKE…PGQA), and 126–155 (EEFQ…NFLT). Residues 1-162 (MESLSELQNP…FLTLPPRDHL (162 aa)) are Extracellular-facing. Acidic residues predominate over residues 133–151 (GDPEEEESDATSTESESED). Residues 163-183 (GLTIFSMLCCFWPLGIAAFYF) traverse the membrane as a helical segment. Residues 184 to 205 (SQGTSKAISKGDFRLANTTSRR) lie on the Cytoplasmic side of the membrane. The helical transmembrane segment at 206 to 226 (ALFLATLSIAVGAGLYVAVVV) threads the bilayer. The Extracellular portion of the chain corresponds to 227-238 (ALAAYMSQNGHS).

The protein belongs to the CD225/Dispanin family.

The protein resides in the membrane. It localises to the golgi apparatus. Its subcellular location is the cis-Golgi network. This chain is Synapse differentiation-inducing gene protein 1-like (SYNDIG1L), found in Bos taurus (Bovine).